Consider the following 544-residue polypeptide: MTTPDLEDKSFDSFGLDDRLLSGLAACDMKQPTLIQNTTIPLALDKGVDITAKAVTGSGKTVAYLLPIFELMLRAEKEKRDIQTALIVVPTRELCEQVSKVITKLTQFCPHLKSLNVTQQLGDDVISSLLEEKPSIIVGTPSRLLKYAKEMDCSKVGYLVIDEADLLLSYGYKEDLIELSEMLPKTKHTFIMSATLNKESDLMKQQFCRSTVASVAVTAAEEERKLLQYYVKCSERDKFLLAYVMFKLQLVKGKTIVFVNEIDRCYRLRLFLEQFGIKACVLNSELPIASRLHIVEQFNKGVFNLLICTDEANKLAEASKSASKQTKEVSRAHEYSSTRGLDFMNVAFVLNFDLPLSSRAYVHRVGRTARANKAGTALSFVVPADQWGKDKVAKLDTAKRDEKVLKKIIKNQESQNMEIKPYSFDMKQVEGFRYRMDDAFRAVTTVGVREARVKEIKTELLNSERLARHFDENPDDLKALRHDKELHTSKVQAHMKRVPDYLLGRKGKLDPNVFVPFRKDDNKIHKKYTKKKKGGDPLKFKKRK.

Positions 9–37 (KSFDSFGLDDRLLSGLAACDMKQPTLIQN) match the Q motif motif. The Helicase ATP-binding domain occupies 41-214 (PLALDKGVDI…QQFCRSTVAS (174 aa)). 54–61 (AVTGSGKT) contacts ATP. The DEAD box motif lies at 162–165 (DEAD). One can recognise a Helicase C-terminal domain in the interval 225-430 (KLLQYYVKCS…PYSFDMKQVE (206 aa)). Residues 525–544 (HKKYTKKKKGGDPLKFKKRK) form a disordered region. Residues 534–544 (GGDPLKFKKRK) are compositionally biased toward basic and acidic residues.

The protein belongs to the DEAD box helicase family. DDX56/DBP9 subfamily.

It is found in the nucleus. It localises to the nucleolus. It carries out the reaction ATP + H2O = ADP + phosphate + H(+). Its function is as follows. ATP-binding RNA helicase involved in the biogenesis of 60S ribosomal subunits and is required for the normal formation of 25S and 5.8S rRNAs. The protein is ATP-dependent RNA helicase DBP9 (DBP9) of Yarrowia lipolytica (strain CLIB 122 / E 150) (Yeast).